We begin with the raw amino-acid sequence, 273 residues long: MSDMHSLLIAAILGVVEGLTEFLPVSSTGHMIIVGHLLGFEGDTAKTFEVVIQLGSILAVVVMFWRRLFGLIGIHFGRPLQHEGESKGRLTLIHILLGMIPAVVLGLLFHDTIKSLFNPINVMYALVVGGLLLIAAECLKPKEPRAPGLDDMTYRQAFMIGCFQCLALWPGFSRSGATISGGMLMGVSRYAASEFSFLLAVPMMMGATALDLYKSWGFLTTGDISMFAVGFITAFVVALIAIKTFLQLIKRISFIPFAIYRFIVAAAVYVVFF.

Transmembrane regions (helical) follow at residues 6 to 26 (SLLI…LPVS), 45 to 65 (AKTF…VMFW), 90 to 110 (LTLI…LLFH), 116 to 136 (LFNP…LIAA), 190 to 210 (YAAS…ATAL), 222 to 242 (GDIS…LIAI), and 252 to 272 (ISFI…YVVF).

The protein belongs to the UppP family.

It is found in the cell inner membrane. The catalysed reaction is di-trans,octa-cis-undecaprenyl diphosphate + H2O = di-trans,octa-cis-undecaprenyl phosphate + phosphate + H(+). Its function is as follows. Catalyzes the dephosphorylation of undecaprenyl diphosphate (UPP). Confers resistance to bacitracin. The chain is Undecaprenyl-diphosphatase from Shigella sonnei (strain Ss046).